We begin with the raw amino-acid sequence, 50 residues long: MSYRNRLDQHSELFHHNWTRPKRSKSQVNGHTEMSQTNIILRSNAKAHRW.

The segment at 21 to 50 (PKRSKSQVNGHTEMSQTNIILRSNAKAHRW) is disordered. The span at 26–41 (SQVNGHTEMSQTNIIL) shows a compositional bias: polar residues.

This is an uncharacterized protein from Bacillus subtilis (strain 168).